Here is a 356-residue protein sequence, read N- to C-terminus: WAT1-related protein At1g68170 (356 aa).

The next 10 membrane-spanning stretches (helical) occupy residues 4–24 (ITAMVVVQIATAGLNIFFKLA), 33–53 (VLVAYRLLFATLFMIPICFIF), 65–85 (LMLLALLSGLLGVVIPSILTI), 94–114 (TFTSAAGVLTPLVTFIFAALL), 125–145 (VGLAKVFGTLFGVGGALVFIF), 176–196 (ISILGALLVFGGNISISLWFL), 210–230 (WNATLMNMMGGVVAMLVALCW), 245–265 (LLTIAYAAILISGMVVAVNAW), 273–293 (LFVSVFSPVGLVIVALVGSFL), and 298–318 (LHLGSIIGTVIIVGALYIVLW). 2 EamA domains span residues 14 to 142 (TAGL…GALV) and 191 to 317 (ISLW…YIVL).

This sequence belongs to the drug/metabolite transporter (DMT) superfamily. Plant drug/metabolite exporter (P-DME) (TC 2.A.7.4) family.

The protein localises to the membrane. This is WAT1-related protein At1g68170 from Arabidopsis thaliana (Mouse-ear cress).